The primary structure comprises 106 residues: RxLR effector protein PSR1 (106 aa).

Residues 1 to 20 (MRLTYVLLVAVTTLLVSCDA) form the signal peptide. A RxLR-dEER motif is present at residues 33–46 (RLLRFVEAADEEER). Residues 50–106 (FSPEKLRKMLGDETYRLKKFGKWDSDGHTFDGLKHYLLLSDSSMVKLRNMYKAWLEQ) form a WY domain region. The Bipartite nuclear localization signal (NLS) signature appears at 56–69 (RKMLGDETYRLKKF).

This sequence belongs to the RxLR effector family. Interacts with host PINP1.

It is found in the secreted. The protein resides in the host nucleus. Functionally, secreted effector that possesses RNA silencing suppression activity by inhibiting the biogenesis of small RNAs in the host plant to promote enhanced susceptibility of host to the pathogen during infection. Interferes with secondary siRNA production by associating with host nuclear protein PINP1 that acts as a regulator of the accumulation of both microRNAs and endogenous small interfering RNAs. The protein is RxLR effector protein PSR1 of Phytophthora sojae (Soybean stem and root rot agent).